A 494-amino-acid polypeptide reads, in one-letter code: Alpha-amylase-related protein (494 aa).

The first 20 residues, 1 to 20 (MFKFTFALALCVLAAGLVLA), serve as a signal peptide directing secretion. At glutamine 21 the chain carries Pyrrolidone carboxylic acid. Cysteine 48 and cysteine 104 form a disulfide bridge. Ca(2+) is bound by residues asparagine 118, glutamine 169, and aspartate 178. Cysteine 157 and cysteine 171 are oxidised to a cystine. Arginine 206 contacts chloride. Aspartate 208 acts as the Nucleophile in catalysis. Histidine 212 contributes to the Ca(2+) binding site. Catalysis depends on glutamate 245, which acts as the Proton donor. 2 residues coordinate chloride: asparagine 308 and arginine 343. Disulfide bonds link cysteine 376-cysteine 382, cysteine 418-cysteine 441, and cysteine 448-cysteine 460.

Belongs to the glycosyl hydrolase 13 family. Monomer. Ca(2+) serves as cofactor. It depends on chloride as a cofactor.

It is found in the secreted. It catalyses the reaction Endohydrolysis of (1-&gt;4)-alpha-D-glucosidic linkages in polysaccharides containing three or more (1-&gt;4)-alpha-linked D-glucose units.. This Drosophila pseudoobscura pseudoobscura (Fruit fly) protein is Alpha-amylase-related protein (Amyrel).